An 883-amino-acid chain; its full sequence is Phosphoenolpyruvate carboxylase (883 aa).

Catalysis depends on residues histidine 138 and lysine 546.

It belongs to the PEPCase type 1 family. Mg(2+) serves as cofactor.

The enzyme catalyses oxaloacetate + phosphate = phosphoenolpyruvate + hydrogencarbonate. In terms of biological role, forms oxaloacetate, a four-carbon dicarboxylic acid source for the tricarboxylic acid cycle. The polypeptide is Phosphoenolpyruvate carboxylase (Salmonella schwarzengrund (strain CVM19633)).